A 508-amino-acid polypeptide reads, in one-letter code: Maturase K (508 aa).

The protein belongs to the intron maturase 2 family. MatK subfamily.

It is found in the plastid. The protein resides in the chloroplast. In terms of biological role, usually encoded in the trnK tRNA gene intron. Probably assists in splicing its own and other chloroplast group II introns. This is Maturase K from Gordonia lasianthus (Loblolly bay).